The sequence spans 320 residues: Tyrosine recombinase Synpcc7942_B2651 (320 aa).

The Core-binding (CB) domain occupies V16–R106. One can recognise a Tyr recombinase domain in the interval R127 to E313. Catalysis depends on residues R167, K193, H264, R267, and H291. The active-site O-(3'-phospho-DNA)-tyrosine intermediate is the Y300.

This sequence belongs to the 'phage' integrase family.

Its subcellular location is the cytoplasm. Its function is as follows. Site-specific tyrosine recombinase, which acts by catalyzing the cutting and rejoining of the recombining DNA molecules. The polypeptide is Tyrosine recombinase Synpcc7942_B2651 (Synechococcus elongatus (strain ATCC 33912 / PCC 7942 / FACHB-805) (Anacystis nidulans R2)).